Reading from the N-terminus, the 340-residue chain is Protein-arginine kinase (340 aa).

The Phosphagen kinase C-terminal domain maps to 21-242; the sequence is VVLSSRIRLA…EQIIMQERVA (222 aa). Residues 24–28, histidine 79, arginine 113, 164–168, and 195–200 each bind ATP; these read SSRIR, RASVM, and RGIYGE.

Belongs to the ATP:guanido phosphotransferase family.

The catalysed reaction is L-arginyl-[protein] + ATP = N(omega)-phospho-L-arginyl-[protein] + ADP + H(+). Functionally, catalyzes the specific phosphorylation of arginine residues in proteins. This is Protein-arginine kinase from Listeria monocytogenes serotype 4b (strain F2365).